Consider the following 138-residue polypeptide: uncharacterized protein (138 aa).

Residues Arg-74–Tyr-96 form a disordered region. Residues Thr-87 to Tyr-96 show a composition bias toward basic and acidic residues.

This is an uncharacterized protein from Orgyia pseudotsugata (Douglas-fir tussock moth).